The sequence spans 288 residues: Orotidine 5'-phosphate decarboxylase (288 aa).

Residue Lys-99 is the Proton donor of the active site.

The protein belongs to the OMP decarboxylase family. Type 2 subfamily.

The enzyme catalyses orotidine 5'-phosphate + H(+) = UMP + CO2. Its pathway is pyrimidine metabolism; UMP biosynthesis via de novo pathway; UMP from orotate: step 2/2. This Myxococcus xanthus (strain DK1622) protein is Orotidine 5'-phosphate decarboxylase (pyrF).